Reading from the N-terminus, the 547-residue chain is Chaperonin GroEL 1 (547 aa).

ATP-binding positions include 30–33 (TLGP), lysine 51, 87–91 (DGTTT), glycine 415, 479–481 (NAA), and aspartate 495. The disordered stretch occupies residues 525–547 (PKKKGAPAGGGMGGMGGMDEMDY). The segment covering 531 to 541 (PAGGGMGGMGG) has biased composition (gly residues).

Belongs to the chaperonin (HSP60) family. As to quaternary structure, forms a cylinder of 14 subunits composed of two heptameric rings stacked back-to-back. Interacts with the co-chaperonin GroES.

It is found in the cytoplasm. It catalyses the reaction ATP + H2O + a folded polypeptide = ADP + phosphate + an unfolded polypeptide.. Its function is as follows. Together with its co-chaperonin GroES, plays an essential role in assisting protein folding. The GroEL-GroES system forms a nano-cage that allows encapsulation of the non-native substrate proteins and provides a physical environment optimized to promote and accelerate protein folding. This is Chaperonin GroEL 1 from Anaeromyxobacter sp. (strain Fw109-5).